The chain runs to 238 residues: Endonuclease III homolog (238 aa).

The region spanning 129–155 (REKGLPREMKDLISLPGIGNKMALLYM) is the HhH domain. The Nucleophile; for N-glycosylase activity role is filled by Lys-149. Cys-217, Cys-224, Cys-227, and Cys-233 together coordinate [4Fe-4S] cluster.

This sequence belongs to the Nth/MutY family. Requires [4Fe-4S] cluster as cofactor.

It localises to the nucleus. It is found in the mitochondrion. It catalyses the reaction 2'-deoxyribonucleotide-(2'-deoxyribose 5'-phosphate)-2'-deoxyribonucleotide-DNA = a 3'-end 2'-deoxyribonucleotide-(2,3-dehydro-2,3-deoxyribose 5'-phosphate)-DNA + a 5'-end 5'-phospho-2'-deoxyribonucleoside-DNA + H(+). Its function is as follows. Bifunctional DNA N-glycosylase with associated apurinic/apyrimidinic (AP) lyase function that catalyzes the first step in base excision repair (BER), the primary repair pathway for the repair of oxidative DNA damage. The DNA N-glycosylase activity releases the damaged DNA base from DNA by cleaving the N-glycosidic bond, leaving an AP site. The AP lyase activity cleaves the phosphodiester bond 3' to the AP site by a beta-elimination. Primarily recognizes and repairs oxidative base damage of pyrimidines. The protein is Endonuclease III homolog of Encephalitozoon cuniculi (strain GB-M1) (Microsporidian parasite).